Reading from the N-terminus, the 231-residue chain is Thiamine import ATP-binding protein ThiQ (231 aa).

In terms of domain architecture, ABC transporter spans 2-230; sequence LHLDRLLIRQ…PPPALRAYLG (229 aa). 32-39 serves as a coordination point for ATP; sequence GPSGGGKS.

This sequence belongs to the ABC transporter superfamily. Thiamine importer (TC 3.A.1.19.1) family. In terms of assembly, the complex is composed of two ATP-binding proteins (ThiQ), two transmembrane proteins (ThiP) and a solute-binding protein (ThiB).

Its subcellular location is the cell inner membrane. It catalyses the reaction thiamine(out) + ATP + H2O = thiamine(in) + ADP + phosphate + H(+). Functionally, part of the ABC transporter complex ThiBPQ involved in thiamine import. Responsible for energy coupling to the transport system. The protein is Thiamine import ATP-binding protein ThiQ of Cereibacter sphaeroides (strain ATCC 17023 / DSM 158 / JCM 6121 / CCUG 31486 / LMG 2827 / NBRC 12203 / NCIMB 8253 / ATH 2.4.1.) (Rhodobacter sphaeroides).